A 693-amino-acid polypeptide reads, in one-letter code: UvrABC system protein C (693 aa).

One can recognise a GIY-YIG domain in the interval aspartate 16–valine 95. Residues glycine 208–valine 243 enclose the UVR domain. The interval alanine 656–glycine 693 is disordered. Residues proline 672–glycine 693 show a composition bias toward low complexity.

The protein belongs to the UvrC family. Interacts with UvrB in an incision complex.

Its subcellular location is the cytoplasm. In terms of biological role, the UvrABC repair system catalyzes the recognition and processing of DNA lesions. UvrC both incises the 5' and 3' sides of the lesion. The N-terminal half is responsible for the 3' incision and the C-terminal half is responsible for the 5' incision. The sequence is that of UvrABC system protein C from Beutenbergia cavernae (strain ATCC BAA-8 / DSM 12333 / CCUG 43141 / JCM 11478 / NBRC 16432 / NCIMB 13614 / HKI 0122).